Consider the following 376-residue polypeptide: Queuine tRNA-ribosyltransferase (376 aa).

Asp92 (proton acceptor) is an active-site residue. Substrate is bound by residues 92–96 (DSGGF), Asp146, Gln190, and Gly217. Residues 248–254 (GVGRPED) form an RNA binding region. The active-site Nucleophile is Asp267. An RNA binding; important for wobble base 34 recognition region spans residues 272 to 276 (TRNAR). 4 residues coordinate Zn(2+): Cys305, Cys307, Cys310, and His337.

The protein belongs to the queuine tRNA-ribosyltransferase family. Homodimer. Within each dimer, one monomer is responsible for RNA recognition and catalysis, while the other monomer binds to the replacement base PreQ1. Zn(2+) is required as a cofactor.

The catalysed reaction is 7-aminomethyl-7-carbaguanine + guanosine(34) in tRNA = 7-aminomethyl-7-carbaguanosine(34) in tRNA + guanine. Its pathway is tRNA modification; tRNA-queuosine biosynthesis. Catalyzes the base-exchange of a guanine (G) residue with the queuine precursor 7-aminomethyl-7-deazaguanine (PreQ1) at position 34 (anticodon wobble position) in tRNAs with GU(N) anticodons (tRNA-Asp, -Asn, -His and -Tyr). Catalysis occurs through a double-displacement mechanism. The nucleophile active site attacks the C1' of nucleotide 34 to detach the guanine base from the RNA, forming a covalent enzyme-RNA intermediate. The proton acceptor active site deprotonates the incoming PreQ1, allowing a nucleophilic attack on the C1' of the ribose to form the product. After dissociation, two additional enzymatic reactions on the tRNA convert PreQ1 to queuine (Q), resulting in the hypermodified nucleoside queuosine (7-(((4,5-cis-dihydroxy-2-cyclopenten-1-yl)amino)methyl)-7-deazaguanosine). The protein is Queuine tRNA-ribosyltransferase of Stenotrophomonas maltophilia (strain R551-3).